Consider the following 128-residue polypeptide: Sulfurtransferase TusD (128 aa).

Cys-78 functions as the Cysteine persulfide intermediate in the catalytic mechanism.

The protein belongs to the DsrE/TusD family. As to quaternary structure, heterohexamer, formed by a dimer of trimers. The hexameric TusBCD complex contains 2 copies each of TusB, TusC and TusD. The TusBCD complex interacts with TusE.

Its subcellular location is the cytoplasm. Part of a sulfur-relay system required for 2-thiolation of 5-methylaminomethyl-2-thiouridine (mnm(5)s(2)U) at tRNA wobble positions. Accepts sulfur from TusA and transfers it in turn to TusE. The polypeptide is Sulfurtransferase TusD (Shigella boydii serotype 18 (strain CDC 3083-94 / BS512)).